We begin with the raw amino-acid sequence, 325 residues long: Heat-inducible transcription repressor HrcA (325 aa).

It belongs to the HrcA family.

Negative regulator of class I heat shock genes (grpE-dnaK-dnaJ and groELS operons). Prevents heat-shock induction of these operons. The protein is Heat-inducible transcription repressor HrcA of Staphylococcus aureus (strain USA300).